The primary structure comprises 258 residues: Imidazole glycerol phosphate synthase subunit HisF (258 aa).

Catalysis depends on residues Asp11 and Asp130.

It belongs to the HisA/HisF family. As to quaternary structure, heterodimer of HisH and HisF.

Its subcellular location is the cytoplasm. It catalyses the reaction 5-[(5-phospho-1-deoxy-D-ribulos-1-ylimino)methylamino]-1-(5-phospho-beta-D-ribosyl)imidazole-4-carboxamide + L-glutamine = D-erythro-1-(imidazol-4-yl)glycerol 3-phosphate + 5-amino-1-(5-phospho-beta-D-ribosyl)imidazole-4-carboxamide + L-glutamate + H(+). It functions in the pathway amino-acid biosynthesis; L-histidine biosynthesis; L-histidine from 5-phospho-alpha-D-ribose 1-diphosphate: step 5/9. Its function is as follows. IGPS catalyzes the conversion of PRFAR and glutamine to IGP, AICAR and glutamate. The HisF subunit catalyzes the cyclization activity that produces IGP and AICAR from PRFAR using the ammonia provided by the HisH subunit. The protein is Imidazole glycerol phosphate synthase subunit HisF of Shigella flexneri serotype 5b (strain 8401).